The primary structure comprises 4516 residues: Dynein axonemal heavy chain 1 (4516 aa).

The stem stretch occupies residues 1–1748 (MVTLSISDTL…YIRAVNAEFI (1748 aa)). The interval 78–160 (SSGSDKSLKN…RKSPLAGTDK (83 aa)) is disordered. 2 stretches are compositionally biased toward basic and acidic residues: residues 83-97 (KSLKNGMEECDKEEA) and 113-129 (ENHDLEKMLKESSRNPE). AAA regions lie at residues 1749 to 1956 (YGYE…VISA), 2016 to 2249 (QAIR…TTVK), 2422 to 2682 (TMMP…VFQG), and 2780 to 2972 (DYNQ…CCTI). The GPAGTGKT motif motif lies at 1787-1794 (GPAGTGKT). 1787–1794 (GPAGTGKT) contributes to the ATP binding site. Residues 1837 to 1843 (CFDEFNR) carry the CFDEFNR motif motif. ATP-binding positions include 2054–2061 (GPTGSGKS), 2460–2467 (GPTGTGKT), and 2819–2826 (GVGGSGRS). The segment at 2987 to 3285 (ATRFLHEIPE…MHKYHFVAKA (299 aa)) is stalk. The stretch at 3293-3394 (LREAQDDLEV…QDTVENLENM (102 aa)) forms a coiled coil. AAA regions lie at residues 3388-3618 (VENL…EERP) and 3831-4050 (LPAF…SYNS).

Belongs to the dynein heavy chain family. Consists of at least two heavy chains and a number of intermediate and light chains. In terms of tissue distribution, expressed in brain.

The protein localises to the cytoplasm. The protein resides in the cytoskeleton. Its subcellular location is the cilium axoneme. It is found in the cell projection. It localises to the cilium. The protein localises to the flagellum. Its function is as follows. Force generating protein of cilia required for sperm flagellum motility. Produces force towards the minus ends of microtubules. Dynein has ATPase activity; the force-producing power stroke is thought to occur on release of ADP. Required in spermatozoa for the formation of the inner dynein arms and biogenesis of the axoneme. The sequence is that of Dynein axonemal heavy chain 1 from Rattus norvegicus (Rat).